A 90-amino-acid polypeptide reads, in one-letter code: Small ribosomal subunit protein uS15c (90 aa).

Belongs to the universal ribosomal protein uS15 family. Part of the 30S ribosomal subunit.

Its subcellular location is the plastid. It is found in the chloroplast. The protein is Small ribosomal subunit protein uS15c (rps15-A) of Brachypodium distachyon (Purple false brome).